Here is a 175-residue protein sequence, read N- to C-terminus: Myosin regulatory light chain 2, atrial isoform (175 aa).

Alanine 2 is modified (N-acetylalanine). Phosphoserine is present on residues serine 22 and serine 23. 3 EF-hand domains span residues 32 to 67, 102 to 137, and 138 to 173; these read AQIQ…LGKV, DPEE…QADK, and FSPA…GDEK. Residues aspartate 45, asparagine 47, aspartate 49, and aspartate 56 each contribute to the Ca(2+) site.

Myosin is a hexamer of 2 heavy chains and 4 light chains.

The polypeptide is Myosin regulatory light chain 2, atrial isoform (MYL7) (Sus scrofa (Pig)).